Here is an 84-residue protein sequence, read N- to C-terminus: uncharacterized protein (84 aa).

The interval C8 to C47 is cysteine motif.

This is an uncharacterized protein from Rhizobium meliloti (strain 1021) (Ensifer meliloti).